A 344-amino-acid polypeptide reads, in one-letter code: GTPase Obg (344 aa).

An Obg domain is found at 1–159; it reads MKFLDLCKVY…RTLWLRLKLI (159 aa). Residues 126–146 are disordered; that stretch reads GNLHFKSSTNQAPRRSNPGQD. The segment covering 130 to 144 has biased composition (polar residues); sequence FKSSTNQAPRRSNPG. In terms of domain architecture, OBG-type G spans 160–327; that stretch reads ADVGLLGLPN…VLRKLRGEIS (168 aa). GTP contacts are provided by residues 166-173, 191-195, 212-215, 279-282, and 308-310; these read GLPNAGKS, FTTLH, DIPG, NKID, and SGV. Mg(2+) contacts are provided by S173 and T193.

Belongs to the TRAFAC class OBG-HflX-like GTPase superfamily. OBG GTPase family. Monomer. The cofactor is Mg(2+).

Its subcellular location is the cytoplasm. Functionally, an essential GTPase which binds GTP, GDP and possibly (p)ppGpp with moderate affinity, with high nucleotide exchange rates and a fairly low GTP hydrolysis rate. Plays a role in control of the cell cycle, stress response, ribosome biogenesis and in those bacteria that undergo differentiation, in morphogenesis control. This chain is GTPase Obg, found in Roseobacter denitrificans (strain ATCC 33942 / OCh 114) (Erythrobacter sp. (strain OCh 114)).